Here is a 109-residue protein sequence, read N- to C-terminus: Putative glutaredoxin-C11 (109 aa).

Residues 2–108 (AEMVARLASE…PLLKSAGALW (107 aa)) form the Glutaredoxin domain. Cys22 and Cys25 are disulfide-bonded. The Responsive for interaction with TGA factors signature appears at 106 to 109 (ALWL).

This sequence belongs to the glutaredoxin family. CC-type subfamily.

It localises to the cytoplasm. It is found in the nucleus. In terms of biological role, has a glutathione-disulfide oxidoreductase activity in the presence of NADPH and glutathione reductase. Reduces low molecular weight disulfides and proteins. The polypeptide is Putative glutaredoxin-C11 (GRXC11) (Oryza sativa subsp. japonica (Rice)).